The primary structure comprises 514 residues: 2,3-bisphosphoglycerate-independent phosphoglycerate mutase (514 aa).

Mn(2+) is bound by residues aspartate 14 and serine 64. Serine 64 (phosphoserine intermediate) is an active-site residue. Substrate contacts are provided by residues histidine 125, 155 to 156 (RD), arginine 187, arginine 193, 263 to 266 (RADR), and lysine 336. 5 residues coordinate Mn(2+): aspartate 403, histidine 407, aspartate 444, histidine 445, and histidine 463.

The protein belongs to the BPG-independent phosphoglycerate mutase family. In terms of assembly, monomer. It depends on Mn(2+) as a cofactor.

The enzyme catalyses (2R)-2-phosphoglycerate = (2R)-3-phosphoglycerate. It participates in carbohydrate degradation; glycolysis; pyruvate from D-glyceraldehyde 3-phosphate: step 3/5. Its function is as follows. Catalyzes the interconversion of 2-phosphoglycerate and 3-phosphoglycerate. This Shewanella oneidensis (strain ATCC 700550 / JCM 31522 / CIP 106686 / LMG 19005 / NCIMB 14063 / MR-1) protein is 2,3-bisphosphoglycerate-independent phosphoglycerate mutase.